The primary structure comprises 92 residues: YcgL domain-containing protein Shewana3_2381 (92 aa).

In terms of domain architecture, YcgL spans 1 to 85 (MLCAVYKSSR…PQVNLLAEHR (85 aa)).

This Shewanella sp. (strain ANA-3) protein is YcgL domain-containing protein Shewana3_2381.